The following is a 142-amino-acid chain: Large ribosomal subunit protein uL13 (142 aa).

This sequence belongs to the universal ribosomal protein uL13 family. Part of the 50S ribosomal subunit.

Functionally, this protein is one of the early assembly proteins of the 50S ribosomal subunit, although it is not seen to bind rRNA by itself. It is important during the early stages of 50S assembly. This Koribacter versatilis (strain Ellin345) protein is Large ribosomal subunit protein uL13.